The primary structure comprises 238 residues: Probable transcriptional regulatory protein YeeN (238 aa).

The protein belongs to the TACO1 family. YeeN subfamily.

It is found in the cytoplasm. The chain is Probable transcriptional regulatory protein YeeN from Salmonella typhimurium (strain LT2 / SGSC1412 / ATCC 700720).